A 215-amino-acid chain; its full sequence is Protein FAM167A (215 aa).

Disordered stretches follow at residues 1 to 26 (MSVP…PPDD) and 63 to 109 (RPAA…LTTG). Residues 124-157 (LRKELAEMRLQDQQLARQLMRLRGDINKLKIEQT) adopt a coiled-coil conformation.

This sequence belongs to the FAM167 (SEC) family.

This Mus musculus (Mouse) protein is Protein FAM167A (Fam167a).